The primary structure comprises 120 residues: Large ribosomal subunit protein uL18 (120 aa).

The protein belongs to the universal ribosomal protein uL18 family. In terms of assembly, part of the 50S ribosomal subunit; part of the 5S rRNA/L5/L18/L25 subcomplex. Contacts the 5S and 23S rRNAs.

Functionally, this is one of the proteins that bind and probably mediate the attachment of the 5S RNA into the large ribosomal subunit, where it forms part of the central protuberance. The sequence is that of Large ribosomal subunit protein uL18 from Chloroherpeton thalassium (strain ATCC 35110 / GB-78).